A 513-amino-acid chain; its full sequence is 2,3-bisphosphoglycerate-independent phosphoglycerate mutase (513 aa).

2 residues coordinate Mn(2+): D13 and S63. S63 (phosphoserine intermediate) is an active-site residue. Residues H124, 154-155 (RD), R186, R192, 262-265 (RADR), and K335 contribute to the substrate site. 5 residues coordinate Mn(2+): D403, H407, D444, H445, and H463.

Belongs to the BPG-independent phosphoglycerate mutase family. In terms of assembly, monomer. Mn(2+) serves as cofactor.

The catalysed reaction is (2R)-2-phosphoglycerate = (2R)-3-phosphoglycerate. Its pathway is carbohydrate degradation; glycolysis; pyruvate from D-glyceraldehyde 3-phosphate: step 3/5. Catalyzes the interconversion of 2-phosphoglycerate and 3-phosphoglycerate. The polypeptide is 2,3-bisphosphoglycerate-independent phosphoglycerate mutase (Myxococcus xanthus (strain DK1622)).